Consider the following 286-residue polypeptide: Pantothenate synthetase (286 aa).

Met-30 to His-37 lines the ATP pocket. His-37 acts as the Proton donor in catalysis. Position 61 (Gln-61) interacts with (R)-pantoate. A beta-alanine-binding site is contributed by Gln-61. Gly-149–Asp-152 contacts ATP. Residue Gln-155 coordinates (R)-pantoate. ATP-binding positions include Val-178 and Leu-186–Arg-189.

The protein belongs to the pantothenate synthetase family. Homodimer.

Its subcellular location is the cytoplasm. The enzyme catalyses (R)-pantoate + beta-alanine + ATP = (R)-pantothenate + AMP + diphosphate + H(+). The protein operates within cofactor biosynthesis; (R)-pantothenate biosynthesis; (R)-pantothenate from (R)-pantoate and beta-alanine: step 1/1. In terms of biological role, catalyzes the condensation of pantoate with beta-alanine in an ATP-dependent reaction via a pantoyl-adenylate intermediate. The polypeptide is Pantothenate synthetase (Pseudomonas fluorescens (strain ATCC BAA-477 / NRRL B-23932 / Pf-5)).